The primary structure comprises 320 residues: Peptidase 1 (320 aa).

The first 18 residues, Met1–Ala18, serve as a signal peptide directing secretion. A propeptide spans Arg19–Glu98 (activation peptide). 3 disulfide bridges follow: Cys102/Cys215, Cys129/Cys169, and Cys163/Cys201. Cys132 is an active-site residue. A glycan (N-linked (GlcNAc...) asparagine) is linked at Asn150. Catalysis depends on residues His268 and Asn288.

Belongs to the peptidase C1 family. N-glycosylated. N-glycanase treatment does not completely remove carbohydrates, suggesting that the protein contains additional glycosylation sites.

The protein resides in the secreted. It catalyses the reaction Broad endopeptidase specificity.. Thiol protease, with a preference for substrates with a large hydrophobic side chain in the P2 position, or with basic residues. In Dermatophagoides pteronyssinus (European house dust mite), this protein is Peptidase 1 (DERP1).